A 99-amino-acid polypeptide reads, in one-letter code: uncharacterized protein (99 aa).

This is an uncharacterized protein from Thermoproteus tenax virus 1 (strain KRA1) (TTV1).